Consider the following 322-residue polypeptide: AA9 family lytic polysaccharide monooxygenase A (322 aa).

A signal peptide spans 1 to 15 (MKVLSLLAAASAASA). Cu(2+) is bound by residues histidine 16 and histidine 96. Intrachain disulfides connect cysteine 54-cysteine 182 and cysteine 152-cysteine 237. Residues histidine 168 and glutamine 177 each contribute to the O2 site. O-linked (Man...) threonine glycans are attached at residues threonine 228 and threonine 236. The region spanning 286-322 (CTAAQWAQCGGMGFSGCTTCASPYTCKKMNDYYSQCS) is the CBM1 domain.

It belongs to the polysaccharide monooxygenase AA9 family. Requires Cu(2+) as cofactor.

It is found in the secreted. It carries out the reaction [(1-&gt;4)-beta-D-glucosyl]n+m + reduced acceptor + O2 = 4-dehydro-beta-D-glucosyl-[(1-&gt;4)-beta-D-glucosyl]n-1 + [(1-&gt;4)-beta-D-glucosyl]m + acceptor + H2O.. Its function is as follows. Lytic polysaccharide monooxygenase (LPMO) that depolymerizes crystalline and amorphous polysaccharides via the oxidation of scissile alpha- or beta-(1-4)-glycosidic bonds, yielding C4 oxidation products. Catalysis by LPMOs requires the reduction of the active-site copper from Cu(II) to Cu(I) by a reducing agent and H(2)O(2) or O(2) as a cosubstrate. Active on tamarind xyloglucan and konjac glucomannan. This is AA9 family lytic polysaccharide monooxygenase A (gh61-1) from Neurospora crassa (strain ATCC 24698 / 74-OR23-1A / CBS 708.71 / DSM 1257 / FGSC 987).